The sequence spans 385 residues: Succinate--CoA ligase [ADP-forming] subunit beta (385 aa).

The ATP-grasp domain maps to 9–244 (KEVLRKYGVS…LDEEDPKEIE (236 aa)). ATP is bound by residues lysine 46, 53-55 (GRG), glutamate 99, cysteine 102, and glutamate 107. Mg(2+)-binding residues include asparagine 199 and aspartate 213. Serine 220 is modified (phosphoserine). Substrate contacts are provided by residues asparagine 264 and 321–323 (GIM).

This sequence belongs to the succinate/malate CoA ligase beta subunit family. As to quaternary structure, heterotetramer of two alpha and two beta subunits. Interacts with BrxC. Mg(2+) is required as a cofactor.

The enzyme catalyses succinate + ATP + CoA = succinyl-CoA + ADP + phosphate. The catalysed reaction is GTP + succinate + CoA = succinyl-CoA + GDP + phosphate. It participates in carbohydrate metabolism; tricarboxylic acid cycle; succinate from succinyl-CoA (ligase route): step 1/1. In terms of biological role, succinyl-CoA synthetase functions in the citric acid cycle (TCA), coupling the hydrolysis of succinyl-CoA to the synthesis of either ATP or GTP and thus represents the only step of substrate-level phosphorylation in the TCA. The beta subunit provides nucleotide specificity of the enzyme and binds the substrate succinate, while the binding sites for coenzyme A and phosphate are found in the alpha subunit. This chain is Succinate--CoA ligase [ADP-forming] subunit beta, found in Bacillus subtilis (strain 168).